The chain runs to 347 residues: NADH-ubiquinone oxidoreductase chain 2 (347 aa).

11 helical membrane passes run 3–23 (PPIL…VLTS), 25–45 (HWML…PILM), 59–79 (YFLM…INLL), 96–116 (TLMT…FWVP), 122–142 (ISLS…LSVL), 153–173 (LLLL…LNQT), 178–198 (ILAY…IYNP), 200–220 (MMLL…MLFM), 237–257 (MPLI…LPPL), 274–294 (EMII…YFYM), and 325–345 (FLPP…IISI).

It belongs to the complex I subunit 2 family. Core subunit of respiratory chain NADH dehydrogenase (Complex I) which is composed of 45 different subunits. Interacts with TMEM242.

Its subcellular location is the mitochondrion inner membrane. It carries out the reaction a ubiquinone + NADH + 5 H(+)(in) = a ubiquinol + NAD(+) + 4 H(+)(out). Its function is as follows. Core subunit of the mitochondrial membrane respiratory chain NADH dehydrogenase (Complex I) which catalyzes electron transfer from NADH through the respiratory chain, using ubiquinone as an electron acceptor. Essential for the catalytic activity and assembly of complex I. The chain is NADH-ubiquinone oxidoreductase chain 2 from Paradoxurus hermaphroditus (Asian palm civet).